The sequence spans 384 residues: MLASYASDPLKSRGRLYKEIPTSYRNEFERDRDRIIHTNAFRRLQYKTQVFINHEGDHYRNRLTHSLEVSTVARSVASTLNLSNDLAETIALAHDLGHTPFGHAGERALNECMREYNGFSHNAQSLKILTLLEKRYAAYNGVNLTWEVLEGIVKHNGPILGEINEYIAEYNKQNDLELSTYASAEAQIAALADDISYISHDLEDSIGAKIIDFNSLAELKYIDQHVVELKSKFKNISSSCLIYEVVRKLIHELITDLLWQTKENLNKEKITNIDEIRNLNYQIVDFTEKTNKNIKETKKFLHERVYKSNKITAISLKCTKIVQGLFKVYMDDINLLPVNWKMLIDSNETYSKARVIADYIAGMTDRFAIQEYNQLCSTSYITCF.

The 137-residue stretch at 62-198 (RLTHSLEVST…AALADDISYI (137 aa)) folds into the HD domain.

The protein belongs to the dGTPase family. Type 2 subfamily.

The protein is Deoxyguanosinetriphosphate triphosphohydrolase-like protein of Rickettsia rickettsii (strain Iowa).